A 563-amino-acid chain; its full sequence is Membrane protein insertase YidC (563 aa).

A helical membrane pass occupies residues 6 to 26; it reads TVLWMIFSFSLLLLWNNWQIH. The tract at residues 36-70 is disordered; the sequence is PAPEAAATQQPKADANGTAASSTASIPSSPAAAPA. A compositionally biased stretch (low complexity) spans 54 to 70; sequence AASSTASIPSSPAAAPA. The next 4 helical transmembrane spans lie at 373 to 393, 443 to 463, 482 to 502, and 512 to 532; these read WGWT…PLAA, LPMV…LASV, PFFI…KLNP, and VMMI…AGLV.

The protein belongs to the OXA1/ALB3/YidC family. Type 1 subfamily. As to quaternary structure, interacts with the Sec translocase complex via SecD. Specifically interacts with transmembrane segments of nascent integral membrane proteins during membrane integration.

Its subcellular location is the cell membrane. Functionally, required for the insertion and/or proper folding and/or complex formation of integral membrane proteins into the membrane. Involved in integration of membrane proteins that insert both dependently and independently of the Sec translocase complex, as well as at least some lipoproteins. Aids folding of multispanning membrane proteins. The sequence is that of Membrane protein insertase YidC from Bordetella bronchiseptica (strain ATCC BAA-588 / NCTC 13252 / RB50) (Alcaligenes bronchisepticus).